A 330-amino-acid polypeptide reads, in one-letter code: Tryptophan--tRNA ligase (330 aa).

ATP is bound by residues 9–11 (QPT) and 17–18 (GN). Positions 10–18 (PTGDPHIGN) match the 'HIGH' region motif. L-tryptophan is bound at residue Asp-136. ATP is bound by residues 148–150 (GED), Ile-187, and 195–199 (KMSKS). The 'KMSKS' region motif lies at 195 to 199 (KMSKS).

Belongs to the class-I aminoacyl-tRNA synthetase family. In terms of assembly, homodimer.

The protein resides in the cytoplasm. The catalysed reaction is tRNA(Trp) + L-tryptophan + ATP = L-tryptophyl-tRNA(Trp) + AMP + diphosphate + H(+). Its function is as follows. Catalyzes the attachment of tryptophan to tRNA(Trp). This chain is Tryptophan--tRNA ligase, found in Deinococcus radiodurans (strain ATCC 13939 / DSM 20539 / JCM 16871 / CCUG 27074 / LMG 4051 / NBRC 15346 / NCIMB 9279 / VKM B-1422 / R1).